We begin with the raw amino-acid sequence, 189 residues long: Cytochrome bo(3) ubiquinol oxidase subunit 3 (189 aa).

At 1–10 (MIKETMRNNK) the chain is on the cytoplasmic side. A helical membrane pass occupies residues 11-31 (LFGLWIYLMSDCIIFAVLFAV). The Extracellular segment spans residues 32 to 52 (YAIISSNFSTNLINHKIFNLS). The helical transmembrane segment at 53 to 73 (YVFLETLILLLSSLSSGMLTI) threads the bilayer. The Cytoplasmic segment spans residues 74–81 (QKNKNNIK). The helical transmembrane segment at 82-102 (IIYFYLLLTFFLGLSFLLMEV) threads the bilayer. Residues 103–122 (NEFYKLILENCSPSQHAFFS) lie on the Extracellular side of the membrane. A helical membrane pass occupies residues 123-143 (IFFTIVGVHGIHVFFGLIFIL). Over 144–161 (SILYQLFYLGITNTIRIR) the chain is Cytoplasmic. A helical membrane pass occupies residues 162–182 (ILCFSLFWHFLDIIWICVFTF). Residues 183–189 (VYLNGVI) lie on the Extracellular side of the membrane.

This sequence belongs to the cytochrome c oxidase subunit 3 family. As to quaternary structure, heterooctamer of two A chains, two B chains, two C chains and two D chains.

It localises to the cell membrane. In terms of biological role, cytochrome bo(3) ubiquinol terminal oxidase is the component of the aerobic respiratory chain of E.coli that predominates when cells are grown at high aeration. Has proton pump activity across the membrane in addition to electron transfer, pumping 2 protons/electron. The chain is Cytochrome bo(3) ubiquinol oxidase subunit 3 (cyoC) from Buchnera aphidicola subsp. Schizaphis graminum (strain Sg).